We begin with the raw amino-acid sequence, 876 residues long: DNA topoisomerase 1 (876 aa).

The Toprim domain maps to 3 to 150 (KSLVIVESPA…RYKRVVFNEI (148 aa)). A Mg(2+)-binding site is contributed by E9. The tract at residues 37 to 69 (LPTAGQTATPTGKAAAASTKKASTTDKEQQKRE) is disordered. The segment covering 38–58 (PTAGQTATPTGKAAAASTKKA) has biased composition (low complexity). The span at 59–69 (STTDKEQQKRE) shows a compositional bias: basic and acidic residues. Residue D119 participates in Mg(2+) binding. The 417-residue stretch at 166-582 (NMDGVNAQQA…EFFADFSRDL (417 aa)) folds into the Topo IA-type catalytic domain. The interaction with DNA stretch occupies residues 200 to 205 (SAGRVQ). The O-(5'-phospho-DNA)-tyrosine intermediate role is filled by Y327. 2 C4-type zinc fingers span residues 668–695 (CPIC…NPNC) and 717–742 (CDKC…NDAC).

Belongs to the type IA topoisomerase family. In terms of assembly, monomer. It depends on Mg(2+) as a cofactor.

The enzyme catalyses ATP-independent breakage of single-stranded DNA, followed by passage and rejoining.. Its function is as follows. Releases the supercoiling and torsional tension of DNA, which is introduced during the DNA replication and transcription, by transiently cleaving and rejoining one strand of the DNA duplex. Introduces a single-strand break via transesterification at a target site in duplex DNA. The scissile phosphodiester is attacked by the catalytic tyrosine of the enzyme, resulting in the formation of a DNA-(5'-phosphotyrosyl)-enzyme intermediate and the expulsion of a 3'-OH DNA strand. The free DNA strand then undergoes passage around the unbroken strand, thus removing DNA supercoils. Finally, in the religation step, the DNA 3'-OH attacks the covalent intermediate to expel the active-site tyrosine and restore the DNA phosphodiester backbone. The sequence is that of DNA topoisomerase 1 from Vibrio cholerae serotype O1 (strain ATCC 39315 / El Tor Inaba N16961).